The sequence spans 395 residues: NAC domain-containing protein 7 (395 aa).

The region spanning 7–156 is the NAC domain; the sequence is VPPGFRFHPT…GWVVCRVFKK (150 aa). The DNA-binding element occupies 107–162; that stretch reads IGMRKTLVFYKGRAPNGQKSDWIMHEYRLETDENGTPQEEGWVVCRVFKKRLAAVR. Composition is skewed to polar residues over residues 344–362 and 382–395; these read AATASASIQNNAKDTSNAE and TASTSSSCQIDLWK. A disordered region spans residues 344-395; that stretch reads AATASASIQNNAKDTSNAEYQVDEEKDPKRASDMGEEYTASTSSSCQIDLWK.

The protein belongs to the plant vascular related NAC-domain protein family. As to quaternary structure, interacts with NAC083/VNI2. Expressed in root, shoot and hypocotyl vascular elements, columella root caps, epidermal and cortex root cells and root-hypocotyl junctions. Observed predominantly in root imature xylem vessels. Present in root developing xylems. Specifically expressed in vessels in the secondary xylem of the root-hypocotyl region, and in vessels but not in interfascicular fibers in stems.

Its subcellular location is the nucleus. Functionally, transcription activator that binds to the secondary wall NAC binding element (SNBE), 5'-(T/A)NN(C/T)(T/C/G)TNNNNNNNA(A/C)GN(A/C/T)(A/T)-3', in the promoter of target genes. Involved in xylem formation by promoting the expression of secondary wall-associated transcription factors and of genes involved in secondary wall biosynthesis and programmed cell death, genes driven by the secondary wall NAC binding element (SNBE). Triggers thickening of secondary walls. The sequence is that of NAC domain-containing protein 7 from Arabidopsis thaliana (Mouse-ear cress).